Consider the following 676-residue polypeptide: MATSQRKILVTSALPYANGPIHLGHMLEYIQTDIWSRYQKLRGHECHYICADDAHGTPIMLKAQQLGMAPEEMIAQVNKEHQQDFADFNIAFDNYHSTHSEENRVLASDIYLKLRANGYIKSKSISQLFDPEKSMFLPDRFVKGTCPKCKSPDQYGDNCDACGATYSPTELINPKSAVSGATPVMKDTEHFFFDLPAFEDMLKEWTRSGALQTEMANKLDEWFEQGLQQWDITRDAPYFGFEIPDAPGKYFYVWLDAPIGYMGSFKNLCDKHPELSFDEFWAKDSKAEVYHFIGKDIVYFHSLFWPAMLHGSGYRQPNSVYAHGYVTVNGAKMSKSKGTFIKARTYLDHLDPEYLRYYYAAKLSSRIDDLDLNLEDFVQRVNSDLVGKLVNLASRTAGFITKRFDGKLAKIADTTLTDAFLAKQEQIAEFYETREYGKAMREIMALADIANGFVADAAPWQLVKQDDQQETAHQVCSNALNLFRILVTYLKPVLPRLALDVEAFFQQTLTWDALNQDMAGHEIAPFKAMMQRVELEKVNAMVADSKENLQATSEPEAPKGPLATDPISDTINFEDFAKIDLRIARIVKAEHVAEADKLLKLQLDIGGETRQVFAGIKSAYSPEDLEGKLTVMVANLAPRKMRFGMSEGMVLAAGPGGSDLWILEPHEGAQPGMRVK.

The short motif at 15–25 (PYANGPIHLGH) is the 'HIGH' region element. Zn(2+)-binding residues include cysteine 146, cysteine 149, cysteine 159, and cysteine 162. The 'KMSKS' region signature appears at 332–336 (KMSKS). Lysine 335 contacts ATP. The tRNA-binding domain occupies 575–676 (DFAKIDLRIA…EGAQPGMRVK (102 aa)).

The protein belongs to the class-I aminoacyl-tRNA synthetase family. MetG type 1 subfamily. In terms of assembly, homodimer. It depends on Zn(2+) as a cofactor.

It is found in the cytoplasm. It carries out the reaction tRNA(Met) + L-methionine + ATP = L-methionyl-tRNA(Met) + AMP + diphosphate. Functionally, is required not only for elongation of protein synthesis but also for the initiation of all mRNA translation through initiator tRNA(fMet) aminoacylation. The chain is Methionine--tRNA ligase from Shewanella sp. (strain ANA-3).